A 1351-amino-acid chain; its full sequence is DNA-directed RNA polymerase subunit beta' (1351 aa).

Zn(2+) is bound by residues Cys70, Cys72, Cys85, and Cys88. Residues Asp460, Asp462, and Asp464 each contribute to the Mg(2+) site. Zn(2+)-binding residues include Cys801, Cys875, Cys882, and Cys885.

This sequence belongs to the RNA polymerase beta' chain family. As to quaternary structure, the RNAP catalytic core consists of 2 alpha, 1 beta, 1 beta' and 1 omega subunit. When a sigma factor is associated with the core the holoenzyme is formed, which can initiate transcription. Requires Mg(2+) as cofactor. It depends on Zn(2+) as a cofactor.

It carries out the reaction RNA(n) + a ribonucleoside 5'-triphosphate = RNA(n+1) + diphosphate. Its function is as follows. DNA-dependent RNA polymerase catalyzes the transcription of DNA into RNA using the four ribonucleoside triphosphates as substrates. This is DNA-directed RNA polymerase subunit beta' from Syntrophobacter fumaroxidans (strain DSM 10017 / MPOB).